The sequence spans 349 residues: DNA polymerase IV (349 aa).

One can recognise a UmuC domain in the interval 7 to 188; that stretch reads IIHIDMDYFF…LPVKKLFGVG (182 aa). Mg(2+)-binding residues include D11 and D106. Residue E107 is part of the active site.

This sequence belongs to the DNA polymerase type-Y family. Monomer. Requires Mg(2+) as cofactor.

The protein resides in the cytoplasm. The catalysed reaction is DNA(n) + a 2'-deoxyribonucleoside 5'-triphosphate = DNA(n+1) + diphosphate. In terms of biological role, poorly processive, error-prone DNA polymerase involved in untargeted mutagenesis. Copies undamaged DNA at stalled replication forks, which arise in vivo from mismatched or misaligned primer ends. These misaligned primers can be extended by PolIV. Exhibits no 3'-5' exonuclease (proofreading) activity. May be involved in translesional synthesis, in conjunction with the beta clamp from PolIII. This is DNA polymerase IV from Francisella tularensis subsp. holarctica (strain OSU18).